The following is a 435-amino-acid chain: Casein kinase 1-like protein 12 (435 aa).

Residues 9 to 278 (YRLGRKIGSG…LKRIFRDLFI (270 aa)) form the Protein kinase domain. Residues 15 to 23 (IGSGSFGEI) and lysine 38 each bind ATP. Aspartate 128 functions as the Proton acceptor in the catalytic mechanism. Disordered stretches follow at residues 313–363 (VGTS…RGPM) and 394–414 (LRNSPVVTTPEGKRSSSTRKH).

This sequence belongs to the protein kinase superfamily. CK1 Ser/Thr protein kinase family. Casein kinase I subfamily. As to quaternary structure, monomer. Autophosphorylated.

The protein localises to the cytoplasm. The catalysed reaction is L-seryl-[protein] + ATP = O-phospho-L-seryl-[protein] + ADP + H(+). It catalyses the reaction L-threonyl-[protein] + ATP = O-phospho-L-threonyl-[protein] + ADP + H(+). Its function is as follows. Casein kinases are operationally defined by their preferential utilization of acidic proteins such as caseins as substrates. It can phosphorylate a large number of proteins. The protein is Casein kinase 1-like protein 12 of Arabidopsis thaliana (Mouse-ear cress).